The primary structure comprises 544 residues: Cytochrome P450 monooxygenase notG' (544 aa).

The N-terminal stretch at 1 to 22 (MELPFSAMSLLYLLVGIAGVIS) is a signal peptide. 2 helical membrane-spanning segments follow: residues 42–62 (WYTL…GLPL) and 66–86 (AKAT…SLLL). N-linked (GlcNAc...) asparagine glycosylation is found at Asn226 and Asn404. Heme is bound at residue Cys487.

The protein belongs to the cytochrome P450 family. It depends on heme as a cofactor.

It is found in the membrane. It participates in alkaloid biosynthesis. Functionally, cytochrome P450 monooxygenase; part of the gene cluster that mediates the biosynthesis of notoamide, a fungal indole alkaloid that belongs to a family of natural products containing a characteristic bicyclo[2.2.2]diazaoctane core. The first step of notoamide biosynthesis involves coupling of L-proline and L-tryptophan by the bimodular NRPS notE', to produce cyclo-L-tryptophan-L-proline called brevianamide F. The reverse prenyltransferase notF' then acts as a deoxybrevianamide E synthase and converts brevianamide F to deoxybrevianamide E via reverse prenylation at C-2 of the indole ring leading to the bicyclo[2.2.2]diazaoctane core. Deoxybrevianamide E is further hydroxylated at C-6 of the indole ring, likely catalyzed by the cytochrome P450 monooxygenase notG', to yield 6-hydroxy-deoxybrevianamide E. 6-hydroxy-deoxybrevianamide E is a specific substrate of the prenyltransferase notC' for normal prenylation at C-7 to produce 6-hydroxy-7-prenyl-deoxybrevianamide, also called notoamide S. As the proposed pivotal branching point in notoamide biosynthesis, notoamide S can be diverted to notoamide E through an oxidative pyran ring closure putatively catalyzed by either notH' cytochrome P450 monooxygenase or the notD' FAD-linked oxidoreductase. This step would be followed by an indole 2,3-epoxidation-initiated pinacol-like rearrangement catalyzed by the notB' FAD-dependent monooxygenase leading to the formation of notoamide C and notoamide D. On the other hand notoamide S is converted to notoamide T by notH' (or notD'), a bifunctional oxidase that also functions as the intramolecular Diels-Alderase responsible for generation of (-)-notoamide T. To generate antipodal (+)-notoaminide T, notH (or notD) in Aspergillus strain MF297-2 is expected to catalyze a Diels-Alder reaction leading to the opposite stereochemistry. The remaining oxidoreductase notD' (or notH') likely catalyzes the oxidative pyran ring formation to yield (-)-stephacidin A. The FAD-dependent monooxygenase notI' is highly similar to notB' and is predicted to catalyze a similar conversion from (-)-stephacidin A to (+)-notoamide B via the 2,3-epoxidation of (-)-stephacidin A followed by a pinacol-type rearrangement. Finally, it remains unclear which enzyme could be responsible for the final hydroxylation steps leading to notoamide A and sclerotiamide. The protein is Cytochrome P450 monooxygenase notG' of Aspergillus versicolor.